The primary structure comprises 714 residues: ATP-dependent DNA helicase DinG (714 aa).

Residues 17–294 (ALQDQIPDFI…TCMEQFRPKT (278 aa)) enclose the Helicase ATP-binding domain. 54–61 (APTGVGKT) serves as a coordination point for ATP. The [4Fe-4S] cluster site is built by C120, C194, C199, and C205. Residues 248-251 (DEGH) carry the DEAH box motif. A Helicase C-terminal domain is found at 517–698 (HIAEMAAYFR…VFPIEQPAVP (182 aa)).

This sequence belongs to the helicase family. DinG subfamily. Type 1 sub-subfamily. The cofactor is [4Fe-4S] cluster.

It carries out the reaction Couples ATP hydrolysis with the unwinding of duplex DNA at the replication fork by translocating in the 5'-3' direction. This creates two antiparallel DNA single strands (ssDNA). The leading ssDNA polymer is the template for DNA polymerase III holoenzyme which synthesizes a continuous strand.. The catalysed reaction is ATP + H2O = ADP + phosphate + H(+). In terms of biological role, DNA-dependent ATPase and 5'-3' DNA helicase. Unwinds D-loops, R-loops, forked DNA and G-quadruplex DNA. The sequence is that of ATP-dependent DNA helicase DinG from Salmonella paratyphi A (strain ATCC 9150 / SARB42).